Here is a 424-residue protein sequence, read N- to C-terminus: Tyrosine--tRNA ligase (424 aa).

Tyr36 serves as a coordination point for L-tyrosine. A 'HIGH' region motif is present at residues 41-50 (PTAPSLHAGH). L-tyrosine-binding residues include Tyr171 and Gln175. The 'KMSKS' region motif lies at 231–235 (KFGKS). An ATP-binding site is contributed by Lys234. The region spanning 356–413 (DGIVDLLVASGLSASKGAARRTIHEGGVSVNNIRVDNEEWVPQSSDFLHGRWLVLRRG) is the S4 RNA-binding domain.

It belongs to the class-I aminoacyl-tRNA synthetase family. TyrS type 1 subfamily. Homodimer.

The protein localises to the cytoplasm. The enzyme catalyses tRNA(Tyr) + L-tyrosine + ATP = L-tyrosyl-tRNA(Tyr) + AMP + diphosphate + H(+). Catalyzes the attachment of tyrosine to tRNA(Tyr) in a two-step reaction: tyrosine is first activated by ATP to form Tyr-AMP and then transferred to the acceptor end of tRNA(Tyr). This is Tyrosine--tRNA ligase from Mycobacterium bovis (strain ATCC BAA-935 / AF2122/97).